Here is a 436-residue protein sequence, read N- to C-terminus: Trigger factor (436 aa).

Residues 161–246 (DDQLNIDFVG…VNSVAEPKLP (86 aa)) form the PPIase FKBP-type domain.

This sequence belongs to the FKBP-type PPIase family. Tig subfamily.

Its subcellular location is the cytoplasm. The enzyme catalyses [protein]-peptidylproline (omega=180) = [protein]-peptidylproline (omega=0). In terms of biological role, involved in protein export. Acts as a chaperone by maintaining the newly synthesized protein in an open conformation. Functions as a peptidyl-prolyl cis-trans isomerase. The sequence is that of Trigger factor from Pseudomonas paraeruginosa (strain DSM 24068 / PA7) (Pseudomonas aeruginosa (strain PA7)).